The primary structure comprises 657 residues: 1-deoxy-D-xylulose-5-phosphate synthase (657 aa).

Thiamine diphosphate contacts are provided by residues His-73 and 113–115; that span reads SHA. Asp-145 is a Mg(2+) binding site. Residues 146 to 147, Asn-175, Tyr-293, and Glu-375 each bind thiamine diphosphate; that span reads GA. Asn-175 is a binding site for Mg(2+).

It belongs to the transketolase family. DXPS subfamily. As to quaternary structure, homodimer. The cofactor is Mg(2+). Requires thiamine diphosphate as cofactor.

The enzyme catalyses D-glyceraldehyde 3-phosphate + pyruvate + H(+) = 1-deoxy-D-xylulose 5-phosphate + CO2. The protein operates within metabolic intermediate biosynthesis; 1-deoxy-D-xylulose 5-phosphate biosynthesis; 1-deoxy-D-xylulose 5-phosphate from D-glyceraldehyde 3-phosphate and pyruvate: step 1/1. Functionally, catalyzes the acyloin condensation reaction between C atoms 2 and 3 of pyruvate and glyceraldehyde 3-phosphate to yield 1-deoxy-D-xylulose-5-phosphate (DXP). This chain is 1-deoxy-D-xylulose-5-phosphate synthase, found in Pseudarthrobacter chlorophenolicus (strain ATCC 700700 / DSM 12829 / CIP 107037 / JCM 12360 / KCTC 9906 / NCIMB 13794 / A6) (Arthrobacter chlorophenolicus).